Here is a 369-residue protein sequence, read N- to C-terminus: Putative FAD-dependent monooxygenase YetM (369 aa).

An N-terminal signal peptide occupies residues 1 to 32 (MKHMLIAGGGIGGLSAAISLRKAGFSVTLCEA). FAD is bound by residues Gly12, 31–32 (EA), Val126, and Asp285.

FAD serves as cofactor.

This Bacillus subtilis (strain 168) protein is Putative FAD-dependent monooxygenase YetM (yetM).